Reading from the N-terminus, the 82-residue chain is MDEKTIEKIKKEAEEIINKFSEVLEKFNLEMEESYYIIDTRNVLREDEAVESNPEFREKFLKIAPKVNKEGYVVVEKGSWLK.

Belongs to the GatC family. In terms of assembly, heterotrimer of A, B and C subunits.

It carries out the reaction L-glutamyl-tRNA(Gln) + L-glutamine + ATP + H2O = L-glutaminyl-tRNA(Gln) + L-glutamate + ADP + phosphate + H(+). The catalysed reaction is L-aspartyl-tRNA(Asn) + L-glutamine + ATP + H2O = L-asparaginyl-tRNA(Asn) + L-glutamate + ADP + phosphate + 2 H(+). Its function is as follows. Allows the formation of correctly charged Asn-tRNA(Asn) or Gln-tRNA(Gln) through the transamidation of misacylated Asp-tRNA(Asn) or Glu-tRNA(Gln) in organisms which lack either or both of asparaginyl-tRNA or glutaminyl-tRNA synthetases. The reaction takes place in the presence of glutamine and ATP through an activated phospho-Asp-tRNA(Asn) or phospho-Glu-tRNA(Gln). This chain is Probable glutamyl-tRNA(Gln) amidotransferase subunit C, found in Methanocaldococcus jannaschii (strain ATCC 43067 / DSM 2661 / JAL-1 / JCM 10045 / NBRC 100440) (Methanococcus jannaschii).